The primary structure comprises 196 residues: Large ribosomal subunit protein bL25 (196 aa).

It belongs to the bacterial ribosomal protein bL25 family. CTC subfamily. Part of the 50S ribosomal subunit; part of the 5S rRNA/L5/L18/L25 subcomplex. Contacts the 5S rRNA. Binds to the 5S rRNA independently of L5 and L18.

This is one of the proteins that binds to the 5S RNA in the ribosome where it forms part of the central protuberance. The chain is Large ribosomal subunit protein bL25 from Bacteroides thetaiotaomicron (strain ATCC 29148 / DSM 2079 / JCM 5827 / CCUG 10774 / NCTC 10582 / VPI-5482 / E50).